Consider the following 294-residue polypeptide: MPSLKDLRNRIASVKATQKITKAMQMVAAAKLRRAQEAAEAARPYSERMGSVLANITQAIGGGGDAPALMTGTGKDNVHLLVVCTAERGLCGGFNSQIARLARDHIRRLLADGKQVKIICVGKKGFDILRRDYASMILDRVDLREVKTLGFVNADAIAKKVIHLFNEGAFDICTLFYSQFKSVISQVPTAQQIIPAGVASAPAAAVDGGNAVYEYEPEPGEILSDLIPRNISVQVFRALLENAAGEMGAKMSAMDNATRNAGEMINKLSITYNRQRQAQITKELIEIISGAEAL.

It belongs to the ATPase gamma chain family. F-type ATPases have 2 components, CF(1) - the catalytic core - and CF(0) - the membrane proton channel. CF(1) has five subunits: alpha(3), beta(3), gamma(1), delta(1), epsilon(1). CF(0) has three main subunits: a, b and c.

The protein resides in the cell inner membrane. Its function is as follows. Produces ATP from ADP in the presence of a proton gradient across the membrane. The gamma chain is believed to be important in regulating ATPase activity and the flow of protons through the CF(0) complex. The sequence is that of ATP synthase gamma chain from Mesorhizobium japonicum (strain LMG 29417 / CECT 9101 / MAFF 303099) (Mesorhizobium loti (strain MAFF 303099)).